A 101-amino-acid polypeptide reads, in one-letter code: Gamma-secretase subunit PEN-2 (101 aa).

Residues 1-17 (MNLERIPNEEKLSLCRR) lie on the Cytoplasmic side of the membrane. The segment at residues 18–36 (YYLGGFAFLPFLWLVNILW) is an intramembrane region (helical). The Cytoplasmic portion of the chain corresponds to 37–57 (FFKEAFLKPAYTEQPQIKSYV). The helical transmembrane segment at 58–78 (KKSALGLLLWVAVLTTWITVF) threads the bilayer. Residues 79 to 101 (QHFRAQWGEVGDYLSFTIPLGTA) are Lumenal-facing.

This sequence belongs to the PEN-2 family. The functional gamma-secretase complex is composed of at least four polypeptides: a presenilin homodimer (psen1 or psen2), nicastrin (ncstn), aph1 (aph1a or aph1b) and psenen.

The protein localises to the endoplasmic reticulum membrane. The protein resides in the golgi apparatus. It localises to the golgi stack membrane. Its subcellular location is the cell membrane. It is found in the membrane. Its function is as follows. Essential subunit of the gamma-secretase complex, an endoprotease complex that catalyzes the intramembrane cleavage of integral membrane proteins such as Notch receptors and APP (amyloid-beta precursor protein). The gamma-secretase complex plays a role in Notch and Wnt signaling cascades and regulation of downstream processes via its role in processing key regulatory proteins. This Danio rerio (Zebrafish) protein is Gamma-secretase subunit PEN-2 (psenen).